Here is a 304-residue protein sequence, read N- to C-terminus: Type II restriction enzyme LlaDCHI (304 aa).

The protein belongs to the DpnII type II restriction endonuclease family.

It catalyses the reaction Endonucleolytic cleavage of DNA to give specific double-stranded fragments with terminal 5'-phosphates.. A P subtype restriction enzyme that recognizes the double-stranded unmethylated sequence 5'-GATC-3' and cleaves before G-1. This is Type II restriction enzyme LlaDCHI (llaDCHIR) from Lactococcus lactis subsp. cremoris (Streptococcus cremoris).